A 355-amino-acid polypeptide reads, in one-letter code: Isocitrate dehydrogenase [NAD] subunit gamma, mitochondrial (355 aa).

Position 1 (Ile-1) is a transit peptide, mitochondrion. Citrate contacts are provided by Thr-82 and Asn-95. Substrate contacts are provided by Arg-98, Arg-129, and Asp-216. A Mn(2+)-binding site is contributed by Asp-216. The ADP site is built by Asn-274, Thr-275, and Asn-286.

It belongs to the isocitrate and isopropylmalate dehydrogenases family. In terms of assembly, heterooligomer of subunits alpha (IDH3A), beta (IDH3B), and gamma (IDH3G) in the apparent ratio of 2:1:1. The heterodimer containing one IDH3A and one IDH3B subunit and the heterodimer containing one IDH3A and one IDH3G subunit assemble into a heterotetramer (which contains two subunits of IDH3A, one of IDH3B and one of IDH3G) and further into the heterooctamer. The cofactor is Mg(2+). Mn(2+) serves as cofactor.

It is found in the mitochondrion. With respect to regulation, the heterotetramer and the heterodimer composed of IDH3A and IDH3G subunits can be allosterically activated by citrate (CIT) or/and ADP, and the two activators can act independently or synergistically. The heterodimer composed of IDH3A and IDH3B subunits cannot be allosterically regulated and the allosteric regulation of the heterotetramer is through the IDH3G subunit and not the IDH3B subunit. The IDH3G subunit contains the allosteric site which consists of a CIT-binding site and an ADP-binding site, and the binding of CIT and ADP causes conformational changes at the allosteric site which are transmitted to the active site in the catalytic subunit (IDH3A) through a cascade of conformational changes at the heterodimer interface, leading to stabilization of the isocitrate-binding at the active site and thus activation of the enzyme. ATP can activate the heterotetramer and the heterodimer composed of IDH3A and IDH3G subunits at low concentrations but inhibits their activities at high concentrations, whereas ATP exhibits only inhibitory effect on the heterodimer composed of IDH3A and IDH3B subunits. Regulatory subunit which plays a role in the allosteric regulation of the enzyme catalyzing the decarboxylation of isocitrate (ICT) into alpha-ketoglutarate. The heterodimer composed of the alpha (IDH3A) and beta (IDH3B) subunits and the heterodimer composed of the alpha (IDH3A) and gamma (IDH3G) subunits, have considerable basal activity but the full activity of the heterotetramer (containing two subunits of IDH3A, one of IDH3B and one of IDH3G) requires the assembly and cooperative function of both heterodimers. The chain is Isocitrate dehydrogenase [NAD] subunit gamma, mitochondrial (IDH3G) from Macaca fascicularis (Crab-eating macaque).